The following is a 357-amino-acid chain: F-box only protein 25 (357 aa).

The tract at residues Met-1–Glu-83 is interaction with beta-actin. In terms of domain architecture, F-box spans Gly-224–Leu-271.

As to quaternary structure, part of a SCF (SKP1-cullin-F-box) protein ligase complex consisting of FBXO25, SKP1, CUL1 and RBX1. Interacts directly with SKP1 and CUL1. Interacts (via C-terminus) with actin (via N-terminus).

It localises to the nucleus. Its pathway is protein modification; protein ubiquitination. In terms of biological role, substrate-recognition component of the SCF (SKP1-CUL1-F-box protein)-type E3 ubiquitin ligase complex. May play a role in accumulation of expanded polyglutamine (polyQ) protein huntingtin (HTT). The polypeptide is F-box only protein 25 (Fbxo25) (Rattus norvegicus (Rat)).